The chain runs to 196 residues: Phosphoheptose isomerase (196 aa).

An SIS domain is found at 36-196; the sequence is MTNCLINGGK…GIDALLLGVE (161 aa). Position 51-53 (51-53) interacts with substrate; sequence NGG. The Zn(2+) site is built by histidine 60 and glutamate 64. Substrate-binding positions include glutamate 64, 93-94, 119-121, serine 124, and glutamine 174; these read ND and STS. Residues glutamine 174 and histidine 182 each contribute to the Zn(2+) site.

It belongs to the SIS family. GmhA subfamily. As to quaternary structure, homotetramer. Requires Zn(2+) as cofactor.

It is found in the cytoplasm. The catalysed reaction is 2 D-sedoheptulose 7-phosphate = D-glycero-alpha-D-manno-heptose 7-phosphate + D-glycero-beta-D-manno-heptose 7-phosphate. Its pathway is carbohydrate biosynthesis; D-glycero-D-manno-heptose 7-phosphate biosynthesis; D-glycero-alpha-D-manno-heptose 7-phosphate and D-glycero-beta-D-manno-heptose 7-phosphate from sedoheptulose 7-phosphate: step 1/1. Functionally, catalyzes the isomerization of sedoheptulose 7-phosphate in D-glycero-D-manno-heptose 7-phosphate. The chain is Phosphoheptose isomerase from Dechloromonas aromatica (strain RCB).